The chain runs to 338 residues: Acetoin:2,6-dichlorophenolindophenol oxidoreductase subunit beta (338 aa).

Tetramer of 2 alpha and 2 beta subunits.

It participates in ketone degradation; acetoin degradation. Functionally, catalyzes the 2,6-dichlorophenolindophenol-dependent cleavage of acetoin into acetate and acetaldehyde, in vitro. The beta subunit is probably not the catalytic subunit of the enzyme. The polypeptide is Acetoin:2,6-dichlorophenolindophenol oxidoreductase subunit beta (acoB) (Cupriavidus necator (strain ATCC 17699 / DSM 428 / KCTC 22496 / NCIMB 10442 / H16 / Stanier 337) (Ralstonia eutropha)).